The following is a 174-amino-acid chain: Large ribosomal subunit protein uL18 (174 aa).

The protein belongs to the universal ribosomal protein uL18 family. In terms of assembly, part of the 50S ribosomal subunit. Contacts the 5S and 23S rRNAs.

Its function is as follows. This is one of the proteins that bind and probably mediate the attachment of the 5S RNA into the large ribosomal subunit, where it forms part of the central protuberance. The polypeptide is Large ribosomal subunit protein uL18 (Methanoregula boonei (strain DSM 21154 / JCM 14090 / 6A8)).